The following is a 302-amino-acid chain: Sodium/potassium-transporting ATPase subunit beta-233 (302 aa).

Over Met-1–Ser-30 the chain is Cytoplasmic. A helical; Signal-anchor for type II membrane protein membrane pass occupies residues Trp-31–Gly-51. Residues Thr-52–Ser-302 are Extracellular-facing. Cystine bridges form between Cys-125–Cys-148 and Cys-158–Cys-174. 2 N-linked (GlcNAc...) asparagine glycosylation sites follow: Asn-193 and Asn-263. Cysteines 213 and 274 form a disulfide.

This sequence belongs to the X(+)/potassium ATPases subunit beta family. The sodium/potassium-transporting ATPase is composed of a catalytic alpha subunit, an auxiliary non-catalytic beta subunit and an additional regulatory subunit. Glycosylated. As to expression, expressed mainly in epithelial tissues.

It localises to the cell membrane. This is the non-catalytic component of the active enzyme, which catalyzes the hydrolysis of ATP coupled with the exchange of Na(+) and K(+) ions across the plasma membrane. The beta subunit regulates, through assembly of alpha/beta heterodimers, the number of sodium pumps transported to the plasma membrane. This is Sodium/potassium-transporting ATPase subunit beta-233 from Anguilla anguilla (European freshwater eel).